We begin with the raw amino-acid sequence, 1038 residues long: uncharacterized protein (1038 aa).

Residues 1–14 (MEENTAQKQSNATG) show a composition bias toward polar residues. Positions 1–100 (MEENTAQKQS…QSENENYDFS (100 aa)) are disordered. Basic and acidic residues predominate over residues 58–71 (NPERELNSDGTDRI). Acidic residues predominate over residues 72-83 (IEEEEEEDDIEN). A phosphoserine mark is found at S112, S113, and S114. Disordered regions lie at residues 144–201 (GKDP…VKRR), 360–381 (ELDNTSEKATLETSSKPVTEQA), 422–441 (SHSNHSNEKFEQIPSPDEKL), 454–526 (QTTK…SGEL), and 556–575 (TNSEVETVTNDPSFSQQPGT). A compositionally biased stretch (low complexity) spans 156–179 (SSMASSSTRSSQSSQVSAIQPQSQ). Residues 180–198 (DDNRVSDIRQMENRRELNV) are compositionally biased toward basic and acidic residues. Basic and acidic residues-rich tracts occupy residues 426–441 (HSNEKFEQIPSPDEKL) and 489–505 (DAEKEKDENLSKPEHHP). At S436 the chain carries Phosphoserine. Residues 506 to 522 (SITSVNSPFLYSPSKQP) are compositionally biased toward polar residues. Phosphoserine is present on residues S618 and S856. Disordered stretches follow at residues 803–864 (RGSL…ASAD), 940–974 (GEAPKEAPPPPRSEPVSTTTKLAKRITQPSLSPAR), and 1005–1024 (KAKSEQSNAKSSSSSIKESK). A compositionally biased stretch (low complexity) spans 826-859 (TLSLKTSTTGLSSHSKSAENNSTQQSTTSPSINS). Residues 955-974 (VSTTTKLAKRITQPSLSPAR) are compositionally biased toward polar residues. Low complexity predominate over residues 1009 to 1020 (EQSNAKSSSSSI).

The protein localises to the cytoplasm. This is an uncharacterized protein from Schizosaccharomyces pombe (strain 972 / ATCC 24843) (Fission yeast).